A 424-amino-acid polypeptide reads, in one-letter code: MQLLNLGLLLLLPFVAGEIAPQPEPLRAGPSDIVPGQYIVTLKEGLASAQIREHKKWVSSVHQANLDSFAAGASGVETVGIMKNFHIHNLNMYSGGFDDKTAEDLRRSPDVKSVHPDQHVYLAKTVTQPQARWGLGYMSSKGMPVPLHSTLVDYLYDDKAGEGVWAYVLDTGINVDHIEFEDRGILGHNAIPNKPHTDEFEHGTYVAGIIAGKTYGVAKKANVVSAKAFDTGSSTYNYILETYDWIVKNITDSNRKNKAVINLSISGAKYQPFDDAVENAFKAGITAVVAAGNDGKDAKNNTPASSPNAITVGAVRWENTRPSLASNYGKIVDIWAPGELIKSCWKGGNNATSTQSGTSAASPHVAGLVAYLMSLENLPSPSAVTARVLNLTIPNLVKDAKDSPNRVVYNGIQERKFTLPKNTK.

The first 17 residues, 1–17, serve as a signal peptide directing secretion; that stretch reads MQLLNLGLLLLLPFVAG. The propeptide occupies 18-123; it reads EIAPQPEPLR…VHPDQHVYLA (106 aa). Residues 37–123 enclose the Inhibitor I9 domain; the sequence is QYIVTLKEGL…VHPDQHVYLA (87 aa). The 293-residue stretch at 132–424 folds into the Peptidase S8 domain; that stretch reads RWGLGYMSSK…RKFTLPKNTK (293 aa). Residues aspartate 170 and histidine 202 each act as charge relay system in the active site. Asparagine 249, asparagine 262, and asparagine 350 each carry an N-linked (GlcNAc...) asparagine glycan. Serine 359 acts as the Charge relay system in catalysis. Asparagine 390 is a glycosylation site (N-linked (GlcNAc...) asparagine).

Belongs to the peptidase S8 family.

The protein localises to the secreted. Its function is as follows. Secreted subtilisin-like serine protease with keratinolytic activity that contributes to pathogenicity. The sequence is that of Subtilisin-like protease 2 (SUB2) from Arthroderma otae (Microsporum canis).